The following is a 256-amino-acid chain: Type III pantothenate kinase (256 aa).

Asp6–Tyr13 provides a ligand contact to ATP. Residues Tyr99 and Gly106–Arg109 each bind substrate. Asp108 functions as the Proton acceptor in the catalytic mechanism. Residue Asp129 participates in K(+) binding. Residue Thr132 coordinates ATP. Thr184 is a binding site for substrate.

Belongs to the type III pantothenate kinase family. As to quaternary structure, homodimer. NH4(+) serves as cofactor. K(+) is required as a cofactor.

The protein resides in the cytoplasm. It carries out the reaction (R)-pantothenate + ATP = (R)-4'-phosphopantothenate + ADP + H(+). Its pathway is cofactor biosynthesis; coenzyme A biosynthesis; CoA from (R)-pantothenate: step 1/5. In terms of biological role, catalyzes the phosphorylation of pantothenate (Pan), the first step in CoA biosynthesis. This is Type III pantothenate kinase from Legionella pneumophila (strain Paris).